The primary structure comprises 928 residues: Type II inositol 3,4-bisphosphate 4-phosphatase (928 aa).

The segment covering 1 to 13 (MEIKEEGTSEEGQ) has biased composition (basic and acidic residues). Disordered regions lie at residues 1 to 23 (MEIK…QAND), 481 to 516 (ILRK…HHSD), and 548 to 575 (SRND…LTSH). One can recognise a C2 domain in the interval 23-165 (DPEDIQFTSI…LKSKEQLLSL (143 aa)). Basic and acidic residues-rich tracts occupy residues 506 to 516 (RRQDSIPHHSD) and 548 to 563 (SRND…KDGD).

Belongs to the inositol 3,4-bisphosphate 4-phosphatase family.

It carries out the reaction a 1,2-diacyl-sn-glycero-3-phospho-(1D-myo-inositol-3,4-bisphosphate) + H2O = a 1,2-diacyl-sn-glycero-3-phospho-(1D-myo-inositol-3-phosphate) + phosphate. The catalysed reaction is 1D-myo-inositol 3,4-bisphosphate + H2O = 1D-myo-inositol 3-phosphate + phosphate. The enzyme catalyses 1D-myo-inositol 1,3,4-trisphosphate + H2O = 1D-myo-inositol 1,3-bisphosphate + phosphate. The protein operates within signal transduction; phosphatidylinositol signaling pathway. Strongly inhibited by inositol hexakisphosphate. Its function is as follows. Catalyzes the hydrolysis of the 4-position phosphate of phosphatidylinositol 3,4-bisphosphate, inositol 1,3,4-trisphosphate and inositol 3,4-bisphosphate. Plays a role in the late stages of macropinocytosis by dephosphorylating phosphatidylinositol 3,4-bisphosphate in membrane ruffles. The lipid phosphatase activity is critical for tumor suppressor function. Antagonizes the PI3K-AKT/PKB signaling pathway by dephosphorylating phosphoinositides and thereby modulating cell cycle progression and cell survival. The polypeptide is Type II inositol 3,4-bisphosphate 4-phosphatase (Inpp4b) (Rattus norvegicus (Rat)).